A 777-amino-acid polypeptide reads, in one-letter code: Acyl-homoserine lactone acylase PvdQ (777 aa).

The N-terminal stretch at 1–25 (MIISRQLPSFCLAALFLSFSGGAHA) is a signal peptide. The propeptide at 196–218 (AGLPAEHWQLAAARQQRFALDRG) is spacer peptide. Residue Ser219 is the Nucleophile of the active site.

This sequence belongs to the peptidase S45 family. Heterodimer of an alpha subunit and a beta subunit processed from the same precursor.

It is found in the periplasm. The enzyme catalyses an N-acyl-L-homoserine lactone + H2O = L-homoserine lactone + a carboxylate. Its function is as follows. Catalyzes the deacylation of acyl-homoserine lactone (AHL or acyl-HSL), releasing homoserine lactone (HSL) and the corresponding fatty acid. Possesses a specificity for the degradation of long-chain acyl-HSLs (side chains of 11 to 14 carbons in length). The chain is Acyl-homoserine lactone acylase PvdQ (pvdQ) from Pseudomonas fluorescens (strain ATCC BAA-477 / NRRL B-23932 / Pf-5).